The sequence spans 205 residues: MAASSLTVTLGRLASACSHSILRPSGPGAASLWSASRRFNSQSTSYLPGYVPKTSLSSPPWPEVVLPDPVEETRHHAEVVKKVNEMIVTGQYGRLFAVVHFASRQWKVTSEDLILIGNELDLACGERIRLEKVLLVGADNFTLLGKPLLGKDLVRVEATVIEKTESWPRIIMRFRKRKNFKKKRIVTTPQTVLRINSIEIAPCLL.

A mitochondrion-targeting transit peptide spans 1–39; it reads MAASSLTVTLGRLASACSHSILRPSGPGAASLWSASRRF.

Belongs to the bacterial ribosomal protein bL21 family. Component of the mitochondrial large ribosomal subunit (mt-LSU). Mature mammalian 55S mitochondrial ribosomes consist of a small (28S) and a large (39S) subunit. The 28S small subunit contains a 12S ribosomal RNA (12S mt-rRNA) and 30 different proteins. The 39S large subunit contains a 16S rRNA (16S mt-rRNA), a copy of mitochondrial valine transfer RNA (mt-tRNA(Val)), which plays an integral structural role, and 52 different proteins.

It is found in the mitochondrion. In Homo sapiens (Human), this protein is Large ribosomal subunit protein bL21m (MRPL21).